The primary structure comprises 65 residues: Small ribosomal subunit protein bS21 (65 aa).

Positions Asp44–Ser65 are disordered. The segment covering Lys48–Gln57 has biased composition (basic residues).

The protein belongs to the bacterial ribosomal protein bS21 family.

The chain is Small ribosomal subunit protein bS21 from Prosthecochloris aestuarii (strain DSM 271 / SK 413).